A 932-amino-acid polypeptide reads, in one-letter code: Leucine--tRNA ligase (932 aa).

The 'HIGH' region signature appears at 38–48; that stretch reads PYLNGNLHAGH. The 'KMSKS' region signature appears at 630 to 634; that stretch reads KMSKS. Lys-633 lines the ATP pocket.

The protein belongs to the class-I aminoacyl-tRNA synthetase family.

Its subcellular location is the cytoplasm. The enzyme catalyses tRNA(Leu) + L-leucine + ATP = L-leucyl-tRNA(Leu) + AMP + diphosphate. The chain is Leucine--tRNA ligase from Archaeoglobus fulgidus (strain ATCC 49558 / DSM 4304 / JCM 9628 / NBRC 100126 / VC-16).